We begin with the raw amino-acid sequence, 514 residues long: Type-2 serine--tRNA ligase (514 aa).

Ala-313 is a binding site for L-serine. Cys-315 is a Zn(2+) binding site. Arg-344 contacts L-serine. Residues 344–346 and 355–356 contribute to the ATP site; these read RWE and RV. 361-363 is a binding site for L-serine; it reads RGE. Residues Glu-363 and Cys-470 each contribute to the Zn(2+) site. Arg-477 serves as a coordination point for ATP.

It belongs to the class-II aminoacyl-tRNA synthetase family. Type-2 seryl-tRNA synthetase subfamily. In terms of assembly, homodimer. Requires Zn(2+) as cofactor.

Its subcellular location is the cytoplasm. The catalysed reaction is tRNA(Ser) + L-serine + ATP = L-seryl-tRNA(Ser) + AMP + diphosphate + H(+). It carries out the reaction tRNA(Sec) + L-serine + ATP = L-seryl-tRNA(Sec) + AMP + diphosphate + H(+). It participates in aminoacyl-tRNA biosynthesis; selenocysteinyl-tRNA(Sec) biosynthesis; L-seryl-tRNA(Sec) from L-serine and tRNA(Sec): step 1/1. Its function is as follows. Catalyzes the attachment of serine to tRNA(Ser). Is also able to aminoacylate tRNA(Sec) with serine, to form the misacylated tRNA L-seryl-tRNA(Sec), which will be further converted into selenocysteinyl-tRNA(Sec). The chain is Type-2 serine--tRNA ligase (serS) from Methanococcus maripaludis (strain DSM 14266 / JCM 13030 / NBRC 101832 / S2 / LL).